The sequence spans 127 residues: Small ribosomal subunit protein uS11 (127 aa).

Belongs to the universal ribosomal protein uS11 family. As to quaternary structure, part of the 30S ribosomal subunit. Interacts with proteins S7 and S18. Binds to IF-3.

In terms of biological role, located on the platform of the 30S subunit, it bridges several disparate RNA helices of the 16S rRNA. Forms part of the Shine-Dalgarno cleft in the 70S ribosome. The sequence is that of Small ribosomal subunit protein uS11 from Chlorobium chlorochromatii (strain CaD3).